Here is a 396-residue protein sequence, read N- to C-terminus: MTLLNPYFGEFGGQFVPQILMPALRQLEEAFVNAQKDPEFQAEFTDLLKNYAGRPTALTLCQNLTAGTKTKLYLKREDLLHGGAHKTNQVLGQALLAKRMGKSEIIAETGAGQHGVATALACALLGLKCRVYMGAKDVERQSPNVFRMRLMGAEVIPVHSGSSTLKDACNEALRDWSGSYETAHYLLGTAAGPHPYPTIVREFQRMIGEETKAQILEKEGRLPDAVLACVGGGSNAIGMFADFIDDTSVRLIGIEPGGLGIESGQHGAPLKHGRLGIYFGMKSPMMQTSDGQIEESYSISAGLDFPSVGPQHAYLNSIGRADYVSITDDEALDAFKTLCRSEGIIPALESSHALAHALKMIKAEPEKEQLLVVNLSGRGDKDIFTVHDILKDRGEI.

Residue lysine 86 is modified to N6-(pyridoxal phosphate)lysine.

It belongs to the TrpB family. In terms of assembly, tetramer of two alpha and two beta chains. Pyridoxal 5'-phosphate is required as a cofactor.

It carries out the reaction (1S,2R)-1-C-(indol-3-yl)glycerol 3-phosphate + L-serine = D-glyceraldehyde 3-phosphate + L-tryptophan + H2O. It functions in the pathway amino-acid biosynthesis; L-tryptophan biosynthesis; L-tryptophan from chorismate: step 5/5. Functionally, the beta subunit is responsible for the synthesis of L-tryptophan from indole and L-serine. The protein is Tryptophan synthase beta chain of Pectobacterium carotovorum subsp. carotovorum (strain PC1).